The primary structure comprises 483 residues: Protein FIZZY-RELATED 2 (483 aa).

A disordered region spans residues 1–28 (MEEEDPTASNVITNSNSSSMRNLSPAMN). The segment covering 7-28 (TASNVITNSNSSSMRNLSPAMN) has biased composition (polar residues). 7 WD repeats span residues 174–211 (QDDFYLNLVDWSAQNVLAVGLGNCVYLWNACSSKVTKL), 215–254 (GAEDSVCSVGWALRGTHLAVGTSTGKVQIWDASRCKRTRT), 257–294 (GHRLRVGALAWGSSVLSSGSRDKSILQRDIRCQEDHVS), 298–337 (GHKSEVCGLKWSYDNRELASGGNDNRLFVWNQHSTQPVLK), 340–382 (EHTA…HLSS), 384–425 (DTCS…KIAT), and 428–467 (GHTYRVLYLAVSPDGQTIVTGAGDETLRFWNVFPSPKSQN).

Belongs to the WD repeat CDC20/Fizzy family. In terms of assembly, associates with the APC/C complex. Interacts with CDC20-1, CDC20-2, CYCA1-1, CYCA1-2, CYCA3-4, CYCB1-1 and CYCB1-2. Binds to GIG1 and PYM. In terms of tissue distribution, expressed in seedlings, flowers, leaves and roots. Expressed in the differentiating cell files of the root elongation zone.

Its subcellular location is the nucleus. It functions in the pathway protein modification; protein ubiquitination. In terms of biological role, activator protein that regulates the ubiquitin ligase activity and substrate specificity of the anaphase promoting complex/cyclosome (APC/C). Necessary and sufficient for endoreduplication and correct cell expansion. Controls meristem size by stimulating endoreduplication in the elongation zone. In Arabidopsis thaliana (Mouse-ear cress), this protein is Protein FIZZY-RELATED 2 (FZR2).